The sequence spans 30 residues: Cycloviolacin-O2 (30 aa).

Residues 1 to 30 (GIPCGESCVWIPCISSAIGCSCKSKVCYRN) constitute a cross-link (cyclopeptide (Gly-Asn)). 3 disulfides stabilise this stretch: Cys4–Cys20, Cys8–Cys22, and Cys13–Cys27.

This is a cyclic peptide.

Probably participates in a plant defense mechanism. This chain is Cycloviolacin-O2, found in Viola biflora (Yellow wood violet).